The sequence spans 129 residues: Large ribosomal subunit protein bL12 (129 aa).

The disordered stretch occupies residues 94–113 (TEGLPKTVKEKTSKSDAEDT).

The protein belongs to the bacterial ribosomal protein bL12 family. In terms of assembly, homodimer. Part of the ribosomal stalk of the 50S ribosomal subunit. Forms a multimeric L10(L12)X complex, where L10 forms an elongated spine to which 2 to 4 L12 dimers bind in a sequential fashion. Binds GTP-bound translation factors.

Its function is as follows. Forms part of the ribosomal stalk which helps the ribosome interact with GTP-bound translation factors. Is thus essential for accurate translation. The chain is Large ribosomal subunit protein bL12 from Chlamydia pneumoniae (Chlamydophila pneumoniae).